Reading from the N-terminus, the 310-residue chain is Putative HTH-type transcriptional regulatory protein LS215_1371 (310 aa).

The region spanning Leu125 to Val180 is the HTH cro/C1-type domain. The segment at residues Ile136 to Lys155 is a DNA-binding region (H-T-H motif).

The polypeptide is Putative HTH-type transcriptional regulatory protein LS215_1371 (Saccharolobus islandicus (strain L.S.2.15 / Lassen #1) (Sulfolobus islandicus)).